A 369-amino-acid chain; its full sequence is Histidinol-phosphate aminotransferase 2 (369 aa).

Residue K231 is modified to N6-(pyridoxal phosphate)lysine.

Belongs to the class-II pyridoxal-phosphate-dependent aminotransferase family. Histidinol-phosphate aminotransferase subfamily. Homodimer. Pyridoxal 5'-phosphate serves as cofactor.

The enzyme catalyses L-histidinol phosphate + 2-oxoglutarate = 3-(imidazol-4-yl)-2-oxopropyl phosphate + L-glutamate. Its pathway is amino-acid biosynthesis; L-histidine biosynthesis; L-histidine from 5-phospho-alpha-D-ribose 1-diphosphate: step 7/9. The protein is Histidinol-phosphate aminotransferase 2 of Legionella pneumophila (strain Lens).